Here is a 113-residue protein sequence, read N- to C-terminus: Con-Ins G3b (113 aa).

Residues 1-21 (MTTSFYFLLVALGLLLYVCQS) form the signal peptide. The propeptide occupies 22–29 (SFGNQHTR). Proline 34 carries the post-translational modification 4-hydroxyproline; partial. Intrachain disulfides connect cysteine 38/cysteine 99, cysteine 50/cysteine 112, and cysteine 98/cysteine 103. Position 41 is a 4-carboxyglutamate (glutamate 41). A Histidine amide modification is found at histidine 51. The propeptide at 52–92 (GKRNDAGKKRGRASPLWQRQGFLSMLKAKRNEAFFLQRDGR) is c peptide. Glutamate 96 bears the 4-carboxyglutamate mark. Proline 102 carries the 4-hydroxyproline; partial modification.

Belongs to the insulin family. In terms of assembly, heterodimer of A and B chains; disulfide-linked. It is noteworthy that in this dimer, in contrast to Con-Ins G1, the chain B is amidated and not the chain A. In terms of tissue distribution, expressed by the venom gland.

Its subcellular location is the secreted. This venom insulin, from a fish-hunting cone snail, facilitates prey capture by rapidly inducing hypoglycemic shock. It is one of the smallest known insulin found in nature and lacks the C-terminal segment of the B chain that, in human insulin, mediates engagement of the insulin receptor (INSR) and assembly of the hormone's hexameric storage form. Despite lacking this segment, it both binds and activates human insulin receptor (long isoform (HIR-B)) with only a 10-fold lower potency. In vivo, intraperitoneal injection of this peptide into zebrafish lowers blood glucose with the same potency than human insulin. In addition, when applied to water, this peptide reduces overall locomotor activity of zebrafish larvae, observed as a significant decrease in the percentage of time spent swimming and movement frequency. This is Con-Ins G3b from Conus geographus (Geography cone).